A 1146-amino-acid chain; its full sequence is Myosin heavy chain kinase A (1146 aa).

The tract at residues 1-25 (MFNIKKRKESITGIPPINVNSPQSV) is disordered. Positions 100–120 (EQMEDQLEKTMKVVRNHTDSL) form a coiled coil. The tract at residues 158-191 (IQEKKSTSSPLVKGGISGGGGSGGDDSFDGANIS) is disordered. Positions 172–181 (GISGGGGSGG) are enriched in gly residues. Coiled coils occupy residues 187 to 241 (GANI…KRIE) and 297 to 502 (SKIE…ASIS). The segment at 500-551 (SISPISSVPKSPITTKRSSIILNSPPMTSQQSSPKIQDLLSSSGSSSVSGIN) is pseudosubstrate/autoinhibitory domain. Residues 521–534 (LNSPPMTSQQSSPK) show a composition bias toward polar residues. Residues 521–540 (LNSPPMTSQQSSPKIQDLLS) form a disordered region. A catalytic region spans residues 552–852 (ISSETGEMGI…KVGAKQLPKA (301 aa)). In terms of domain architecture, Alpha-type protein kinase spans 564–808 (EFDPIINKWI…VCALLDLDVK (245 aa)). 778–783 (GLGNLG) provides a ligand contact to ATP. WD repeat units lie at residues 867-897 (SFRERVNSIAFFDNQKLLCAGYGDGTYRVFD), 910-938 (GHRKSIESIACNSNYIFTSSPDNTIKVHI), 952-980 (GHTGEVNCVVANEKYLFSCSYDKTIKVWD), 993-1021 (VHTKYIKTLALSGRYLFSGGNDQIIYVWD), 1033-1061 (GHEDWVLSLHCTASYLFSTSKDNVIKIWD), 1073-1101 (GHWNSVSSCVVKDRYLYSGSEDNSIKVWD), and 1114-1142 (SHSLGVKCLMVFNNQIISAAFDGSIKVWE).

The protein belongs to the protein kinase superfamily. Alpha-type protein kinase family. ALPK subfamily. In terms of assembly, oligomer. Requires Mg(2+) as cofactor. Mn(2+) is required as a cofactor. Post-translationally, the N-terminus is blocked.

It carries out the reaction L-threonyl-[myosin heavy-chain] + ATP = O-phospho-L-threonyl-[myosin heavy-chain] + ADP + H(+). Functionally, catalyzes its autophosphorylation, which is needed for enzymatic activity and phosphorylates myosin II heavy chain at a threonine in the C-terminal tail region. This phosphorylation is critical for regulating the assembly and disassembly of myosin II filament, affecting myosin localization during an array of cellular contractile events, including cytokinesis and capping of cell surface receptors as well as chemotactic cell locomotion. This chain is Myosin heavy chain kinase A (mhkA), found in Dictyostelium discoideum (Social amoeba).